We begin with the raw amino-acid sequence, 406 residues long: Probable endo-xylogalacturonan hydrolase A (406 aa).

An N-terminal signal peptide occupies residues 1-18; the sequence is MLYPRNLALFSLLSLSSA. PbH1 repeat units lie at residues 183 to 213, 214 to 235, 237 to 257, and 299 to 320; these read TQHV…DIGA, STHV…AFKP, SNYV…SVGS, and VKNV…QIES. The active-site Proton donor is Asp-228. His-251 is an active-site residue. N-linked (GlcNAc...) asparagine glycosylation occurs at Asn-301.

This sequence belongs to the glycosyl hydrolase 28 family.

It localises to the secreted. Pectinolytic enzyme involved in the degradation of xylogalacturonan (xga), a galacturonan backbone heavily substituted with xylose, and which is one important component of the hairy regions of pectin. Activity requires a galacturonic acid backbone substituted with xylose. This chain is Probable endo-xylogalacturonan hydrolase A (xghA), found in Aspergillus fumigatus (strain CBS 144.89 / FGSC A1163 / CEA10) (Neosartorya fumigata).